Here is a 553-residue protein sequence, read N- to C-terminus: Phosphoglucomutase (553 aa).

The segment at 1–25 is disordered; the sequence is MQATIKRYPTSPISGQTLGTSGLRK. Residues 11–20 are compositionally biased toward polar residues; the sequence is SPISGQTLGT. Residues Thr-20, Arg-24, 117–118, and Lys-131 each bind substrate; that span reads SH. The active-site Phosphoserine intermediate is Ser-117. Ser-117 contacts Mg(2+). The Mg(2+) site is built by Asp-289, Asp-291, and Asp-293. Substrate is bound by residues 293-294, Thr-352, 371-373, Lys-384, and Arg-509; these read DR and EES.

This sequence belongs to the phosphohexose mutase family. The cofactor is Mg(2+).

The protein localises to the cytoplasm. The catalysed reaction is alpha-D-glucose 1-phosphate = alpha-D-glucose 6-phosphate. Its function is as follows. Catalyzes the reversible conversion of glucose 1-phosphate into glucose 6-phosphate. This enzyme participates in both the breakdown and synthesis of glucose. The sequence is that of Phosphoglucomutase from Entamoeba histolytica (strain ATCC 30459 / HM-1:IMSS / ABRM).